We begin with the raw amino-acid sequence, 140 residues long: Nucleoside diphosphate kinase (140 aa).

6 residues coordinate ATP: Lys11, Phe59, Arg87, Thr93, Arg104, and Asn114. His117 serves as the catalytic Pros-phosphohistidine intermediate.

Belongs to the NDK family. Homotetramer. Mg(2+) serves as cofactor.

Its subcellular location is the cytoplasm. It catalyses the reaction a 2'-deoxyribonucleoside 5'-diphosphate + ATP = a 2'-deoxyribonucleoside 5'-triphosphate + ADP. The enzyme catalyses a ribonucleoside 5'-diphosphate + ATP = a ribonucleoside 5'-triphosphate + ADP. Functionally, major role in the synthesis of nucleoside triphosphates other than ATP. The ATP gamma phosphate is transferred to the NDP beta phosphate via a ping-pong mechanism, using a phosphorylated active-site intermediate. The sequence is that of Nucleoside diphosphate kinase from Acidiphilium cryptum (strain JF-5).